A 179-amino-acid polypeptide reads, in one-letter code: HTH-type transcriptional regulator AldR (179 aa).

The region spanning 32-93 (LDEVDRRILS…DIDPVAVGLP (62 aa)) is the HTH asnC-type domain. Positions 51 to 70 (NNALADTVGIAPSTCHGRVR) form a DNA-binding region, H-T-H motif.

Homooctamer. Homotetramer. Tetramer of dimers. The N-terminal DNA-binding domains are swapped, forming a dimer, and four dimers are assembled into an octamer through crystal symmetry.

The DNA-binding activity of AldR is modulated by interaction of AldR with various amino acids. Alanine, tryptophan, tyrosine and aspartate completely abolish the DNA binding ability of AldR. On the other hand, glutamate and asparagine reduce AldR binding to DNA but do not completely abolish it. Binding of amino acids can lead to structural modifications and changes in oligomeric association. Activity is also inhibited by 3 small molecule inhibitors, tetrahydroquinoline carbonitrile derivative (S010-0261), levothyroxine and liothyronine, which can disrupt the AldR-DNA complex. Its function is as follows. Transcriptional regulator that might play a role under hypoxic conditions. Regulates the expression of ald, which encodes L-alanine dehydrogenase. Serves as both an activator for ald expression in the presence of L-alanine and a repressor in the absence of L-alanine. Acts by binding directly to the upstream region of the ald gene. Four AldR-binding sites (O2, O1, O4 and O3) were identified upstream of the ald gene. O2, O1 and O4 are required for the induction of ald expression by alanine, while O3 is directly involved in the repression of ald expression, by occluding the access of RNA polymerase to the ald promoter. In addition to O3, both O1 and O4 are also necessary for full repression of ald expression in the absence of alanine. This Mycobacterium tuberculosis (strain ATCC 25618 / H37Rv) protein is HTH-type transcriptional regulator AldR.